The chain runs to 473 residues: Phosphatidylserine synthase 1 (473 aa).

The residue at position 2 (A2) is an N-acetylalanine. Residues 2–35 (ASCVGSRTLSKDDVNYKMHFRMINEQQVEDITID) lie on the Cytoplasmic side of the membrane. A helical membrane pass occupies residues 36-56 (FFYRPHTITLLSFTIVSLMYF). Topologically, residues 57–72 (AFTRDDSVPEDNIWRG) are lumenal. The helical transmembrane segment at 73–93 (ILSVIFFFLIISVLAFPNGPF) threads the bilayer. Topologically, residues 94–102 (TRPHPALWR) are cytoplasmic. The chain crosses the membrane as a helical span at residues 103-123 (MVFGLSVLYFLFLVFLLFLNF). Topologically, residues 124–186 (EQVKSLMYWL…AMKALLIRSY (63 aa)) are lumenal. A helical transmembrane segment spans residues 187–207 (GLCWTISITWELTELFFMHLL). The Cytoplasmic segment spans residues 208 to 216 (PNFAECWWD). Residues 217-237 (QVILDILLCNGGGIWLGMVVC) traverse the membrane as a helical segment. The Lumenal portion of the chain corresponds to 238–286 (RFLEMRTYHWASFKDIHTTTGKIKRAVLQFTPASWTYVRWFDPKSSFQR). Residues 287-307 (VAGVYLFMIIWQLTELNTFFL) traverse the membrane as a helical segment. Residues 308 to 319 (KHIFVFQASHPL) are Cytoplasmic-facing. Residues 320–342 (SWGRILFIGGITAPTVRQYYAYL) form a helical membrane-spanning segment. The Lumenal segment spans residues 343–355 (TDTQCKRVGTQCW). Residues 356–376 (VFGVIGFLEAIVCIKFGQDLF) traverse the membrane as a helical segment. Over 377–383 (SKTQILY) the chain is Cytoplasmic. A helical transmembrane segment spans residues 384 to 404 (VVLWLLCVAFTTFLCLYGMIW). Topologically, residues 405–473 (YAEHYGHREK…SKVTNGVGKK (69 aa)) are lumenal. Phosphoserine occurs at positions 417, 425, 442, and 454. Positions 430–473 (WHHRKGTKGSEDSPPKHAGNNESHSSRRRNRHSKSKVTNGVGKK) are disordered. Basic residues predominate over residues 455 to 464 (SRRRNRHSKS).

This sequence belongs to the phosphatidyl serine synthase family.

The protein localises to the endoplasmic reticulum membrane. It catalyses the reaction a 1,2-diacyl-sn-glycero-3-phosphoethanolamine + L-serine = a 1,2-diacyl-sn-glycero-3-phospho-L-serine + ethanolamine. It carries out the reaction a 1,2-diacyl-sn-glycero-3-phosphocholine + L-serine = a 1,2-diacyl-sn-glycero-3-phospho-L-serine + choline. It functions in the pathway phospholipid metabolism; phosphatidylserine biosynthesis. With respect to regulation, requires calcium ions. Inhibited by exogenous phosphatidylserine. In terms of biological role, catalyzes a base-exchange reaction in which the polar head group of phosphatidylethanolamine (PE) or phosphatidylcholine (PC) is replaced by L-serine. Catalyzes mainly the conversion of phosphatidylcholine. Also converts, in vitro and to a lesser extent, phosphatidylethanolamine. The sequence is that of Phosphatidylserine synthase 1 (PTDSS1) from Homo sapiens (Human).